Consider the following 125-residue polypeptide: Photoactive yellow protein (125 aa).

The 64-residue stretch at 23-86 folds into the PAS domain; the sequence is LDGLAFGAIQ…GKFKEGVASG (64 aa). An S-(4-hydroxycinnamyl)cysteine modification is found at Cys69.

The protein belongs to the photoactive yellow protein family. Monomer. The 4-hydroxycinnamic acid (p-coumaric acid) chromophore is covalently bound via a thioester linkage.

Its function is as follows. Photoactive blue light protein. Probably functions as a photoreceptor for a negative phototaxis response. The protein is Photoactive yellow protein (pyp) of Halorhodospira halophila (Ectothiorhodospira halophila).